Reading from the N-terminus, the 366-residue chain is Glutamate 5-kinase (366 aa).

Lys-17 is a binding site for ATP. Substrate contacts are provided by Ser-57, Asp-144, and Asn-156. ATP-binding positions include 176 to 177 and 216 to 222; these read SD and TGGMVSK. The PUA domain maps to 278-356; that stretch reads SGALTLDDGA…SDLPAEMRRP (79 aa).

Belongs to the glutamate 5-kinase family.

The protein resides in the cytoplasm. The enzyme catalyses L-glutamate + ATP = L-glutamyl 5-phosphate + ADP. Its pathway is amino-acid biosynthesis; L-proline biosynthesis; L-glutamate 5-semialdehyde from L-glutamate: step 1/2. Its function is as follows. Catalyzes the transfer of a phosphate group to glutamate to form L-glutamate 5-phosphate. In Mycolicibacterium vanbaalenii (strain DSM 7251 / JCM 13017 / BCRC 16820 / KCTC 9966 / NRRL B-24157 / PYR-1) (Mycobacterium vanbaalenii), this protein is Glutamate 5-kinase.